The following is a 117-amino-acid chain: Ig heavy chain V region 108A (117 aa).

A signal peptide spans Met1–Ser19. The Ig-like domain occupies Glu20–Arg117.

The protein is Ig heavy chain V region 108A (Igh-VJ558) of Mus musculus (Mouse).